The sequence spans 250 residues: PF03932 family protein CutC (250 aa).

It belongs to the CutC family.

It is found in the cytoplasm. This is PF03932 family protein CutC from Vibrio vulnificus (strain CMCP6).